We begin with the raw amino-acid sequence, 780 residues long: Ral guanine nucleotide dissociation stimulator-like 2 (780 aa).

A disordered region spans residues 1–92 (MLPRPLRLLW…PTPPPRSSRR (92 aa)). Serine 13 bears the Phosphoserine mark. Positions 31 to 42 (GGGPGGRGVGGG) are enriched in gly residues. Residues 43–65 (QEEEEEEEEDEAPVSVWDEEEDG) are compositionally biased toward acidic residues. An N-terminal Ras-GEF domain is found at 89–213 (SSRRLRAGTL…GSADLIRNLR (125 aa)). In terms of domain architecture, Ras-GEF spans 244–516 (LADHLAEQLT…HRVSCEVEPP (273 aa)). The span at 596-613 (HSLADPSHLSPPASSPRP) shows a compositional bias: low complexity. Disordered regions lie at residues 596 to 651 (HSLA…GASD) and 741 to 769 (TATLGLTSSPSASGTPPSEGGGGSFPRIK). Positions 651-738 (DCRIIRVQME…HDFLLRQRRR (88 aa)) constitute a Ras-associating domain. Positions 741-758 (TATLGLTSSPSASGTPPS) are enriched in low complexity.

Interacts with SAMD9.

Functionally, probable guanine nucleotide exchange factor. Putative effector of Ras and/or Rap. Associates with the GTP-bound form of Rap 1A and H-Ras in vitro. This is Ral guanine nucleotide dissociation stimulator-like 2 (RGL2) from Canis lupus familiaris (Dog).